The primary structure comprises 117 residues: Immunoglobulin heavy variable 1-69-2 (117 aa).

The signal sequence occupies residues 1-19; the sequence is MDCTWRILLLVAAATGTHA. The framework-1 stretch occupies residues 20 to 44; it reads EVQLVQSGAEVKKPGATVKISCKVS. Residues 20–117 form the Ig-like domain; that stretch reads EVQLVQSGAE…EDTAVYYCAT (98 aa). A disulfide bridge connects residues cysteine 41 and cysteine 115. A complementarity-determining-1 region spans residues 45–52; the sequence is GYTFTDYY. Positions 53–69 are framework-2; it reads MHWVQQAPGKGLEWMGL. The segment at 70-77 is complementarity-determining-2; it reads VDPEDGET. The interval 78–115 is framework-3; the sequence is IYAEKFQGRVTITADTSTDTAYMELSSLRSEDTAVYYC. The interval 116 to 117 is complementarity-determining-3; sequence AT.

In terms of assembly, immunoglobulins are composed of two identical heavy chains and two identical light chains; disulfide-linked.

The protein localises to the secreted. The protein resides in the cell membrane. Its function is as follows. V region of the variable domain of immunoglobulin heavy chains that participates in the antigen recognition. Immunoglobulins, also known as antibodies, are membrane-bound or secreted glycoproteins produced by B lymphocytes. In the recognition phase of humoral immunity, the membrane-bound immunoglobulins serve as receptors which, upon binding of a specific antigen, trigger the clonal expansion and differentiation of B lymphocytes into immunoglobulins-secreting plasma cells. Secreted immunoglobulins mediate the effector phase of humoral immunity, which results in the elimination of bound antigens. The antigen binding site is formed by the variable domain of one heavy chain, together with that of its associated light chain. Thus, each immunoglobulin has two antigen binding sites with remarkable affinity for a particular antigen. The variable domains are assembled by a process called V-(D)-J rearrangement and can then be subjected to somatic hypermutations which, after exposure to antigen and selection, allow affinity maturation for a particular antigen. The sequence is that of Immunoglobulin heavy variable 1-69-2 from Homo sapiens (Human).